Here is a 171-residue protein sequence, read N- to C-terminus: Protein-export protein SecB (171 aa).

Belongs to the SecB family. In terms of assembly, homotetramer, a dimer of dimers. One homotetramer interacts with 1 SecA dimer.

The protein localises to the cytoplasm. Functionally, one of the proteins required for the normal export of preproteins out of the cell cytoplasm. It is a molecular chaperone that binds to a subset of precursor proteins, maintaining them in a translocation-competent state. It also specifically binds to its receptor SecA. This Histophilus somni (strain 129Pt) (Haemophilus somnus) protein is Protein-export protein SecB.